Consider the following 293-residue polypeptide: Oxidoreductase R2 (293 aa).

This sequence belongs to the asaB hydroxylase/desaturase family.

Its pathway is secondary metabolite biosynthesis. Functionally, oxidoreductase; part of the gene cluster that mediates the biosynthesis of squalestatin S1 (SQS1, also known as zaragozic acid A), a heavily oxidized fungal polyketide that offers potent cholesterol lowering activity by targeting squalene synthase (SS). SQS1 is composed of a 2,8-dioxobicyclic[3.2.1]octane-3,4,5-tricarboxyclic acid core that is connected to two lipophilic polyketide arms. These initial steps feature the priming of an unusual benzoic acid starter unit onto the highly reducing polyketide synthase pks2, followed by oxaloacetate extension and product release to generate a tricarboxylic acid containing product. The phenylalanine ammonia lyase (PAL) M7 and the acyl-CoA ligase M9 are involved in transforming phenylalanine into benzoyl-CoA. The citrate synthase-like protein R3 is involved in connecting the C-alpha-carbons of the hexaketide chain and oxaloacetate to afford the tricarboxylic acid unit. The potential hydrolytic enzymes, M8 and M10, are in close proximity to pks2 and may participate in product release. On the other side, the tetraketide arm is synthesized by a the squalestatin tetraketide synthase pks1 and enzymatically esterified to the core in the last biosynthetic step, by the acetyltransferase M4. The biosynthesis of the tetraketide must involve 3 rounds of chain extension. After the first and second rounds methyl-transfer occurs, and in all rounds of extension the ketoreductase and dehydratase are active. The enoyl reductase and C-MeT of pks1 are not active in the final round of extension. The acetyltransferase M4 appears to have a broad substrate selectivity for its acyl CoA substrate, allowing the in vitro synthesis of novel squalestatins. The biosynthesis of SQS1 requires several oxidative steps likely performed by oxidoreductases M1, R1 and R2. Finally, in support of the identification of the cluster as being responsible for SQS1 production, the cluster contains a gene encoding a putative squalene synthase (SS) R6, suggesting a likely mechanism for self-resistance. This is Oxidoreductase R2 from Phoma sp. (strain ATCC 20986 / MF5453).